Consider the following 141-residue polypeptide: ATP synthase epsilon chain (141 aa).

This sequence belongs to the ATPase epsilon chain family. In terms of assembly, F-type ATPases have 2 components, CF(1) - the catalytic core - and CF(0) - the membrane proton channel. CF(1) has five subunits: alpha(3), beta(3), gamma(1), delta(1), epsilon(1). CF(0) has three main subunits: a, b and c.

It localises to the cell inner membrane. In terms of biological role, produces ATP from ADP in the presence of a proton gradient across the membrane. The sequence is that of ATP synthase epsilon chain from Gluconacetobacter diazotrophicus (strain ATCC 49037 / DSM 5601 / CCUG 37298 / CIP 103539 / LMG 7603 / PAl5).